We begin with the raw amino-acid sequence, 284 residues long: Tropomyosin Lep s 1.0101 (284 aa).

Residues 1-273 (MEAIKKKMQA…KDRYRALADE (273 aa)) adopt a coiled-coil conformation. The segment covering 155 to 171 (AEDADGKSDEVSRKMAQ) has biased composition (basic and acidic residues). The disordered stretch occupies residues 155–187 (AEDADGKSDEVSRKMAQVEDDLEVAEDRVKSGD).

The protein belongs to the tropomyosin family. As to quaternary structure, homodimer.

Tropomyosin, in association with the troponin complex, plays a central role in the calcium dependent regulation of muscle contraction. The protein is Tropomyosin Lep s 1.0101 of Lepisma saccharinum (Silverfish).